Reading from the N-terminus, the 395-residue chain is MKKDYYEVLGLSRSATKDEIKKAYRKLAMQYHPDKNPDNKDAEEHFKEVNEAYEALSNDDKRRRYDQFGHAGVGSSAASGGGQYGAGASDFSDIFSAFNDMFGGGKQRGGFEDVFGGAAGAGGRRGRASGGIHGTDLKIRLKLTLEEIAHGVEKTLKIKKQIACTECNGTGSKSGATETCPTCHGSGEVRQAAKTMFGQFVNITACPTCGGEGRVVKDRCVSCYGEGIKQGEVTVKVTVPAGVQDSNYLTLRGQGNAGPRGGANGDLIVVIEEKPHEKFQRNGDDVIYHLALGFPDLVLGTKVDVPTLDGSVKLTIPPSTQPETMLRIPGHGIGHLRGSGRGDQYVRVNVFVPKEVSSHDRELLKELKNSSAISPADQNDREEKSFFEKARDIFS.

A J domain is found at 4–69 (DYYEVLGLSR…DKRRRYDQFG (66 aa)). A CR-type zinc finger spans residues 151 to 232 (GVEKTLKIKK…CYGEGIKQGE (82 aa)). Cys-164, Cys-167, Cys-180, Cys-183, Cys-206, Cys-209, Cys-220, and Cys-223 together coordinate Zn(2+). CXXCXGXG motif repeat units lie at residues 164–171 (CTECNGTG), 180–187 (CPTCHGSG), 206–213 (CPTCGGEG), and 220–227 (CVSCYGEG).

The protein belongs to the DnaJ family. In terms of assembly, homodimer. The cofactor is Zn(2+).

The protein resides in the cytoplasm. In terms of biological role, participates actively in the response to hyperosmotic and heat shock by preventing the aggregation of stress-denatured proteins and by disaggregating proteins, also in an autonomous, DnaK-independent fashion. Unfolded proteins bind initially to DnaJ; upon interaction with the DnaJ-bound protein, DnaK hydrolyzes its bound ATP, resulting in the formation of a stable complex. GrpE releases ADP from DnaK; ATP binding to DnaK triggers the release of the substrate protein, thus completing the reaction cycle. Several rounds of ATP-dependent interactions between DnaJ, DnaK and GrpE are required for fully efficient folding. Also involved, together with DnaK and GrpE, in the DNA replication of plasmids through activation of initiation proteins. This Chlorobium phaeobacteroides (strain DSM 266 / SMG 266 / 2430) protein is Chaperone protein DnaJ.